The primary structure comprises 426 residues: D-tagatose-1,6-bisphosphate aldolase subunit KbaZ (426 aa).

This sequence belongs to the GatZ/KbaZ family. KbaZ subfamily. Forms a complex with KbaY.

It participates in carbohydrate metabolism; D-tagatose 6-phosphate degradation; D-glyceraldehyde 3-phosphate and glycerone phosphate from D-tagatose 6-phosphate: step 2/2. In terms of biological role, component of the tagatose-1,6-bisphosphate aldolase KbaYZ that is required for full activity and stability of the Y subunit. Could have a chaperone-like function for the proper and stable folding of KbaY. When expressed alone, KbaZ does not show any aldolase activity. This is D-tagatose-1,6-bisphosphate aldolase subunit KbaZ from Escherichia coli O7:K1 (strain IAI39 / ExPEC).